Reading from the N-terminus, the 124-residue chain is Heat-labile enterotoxin B chain (124 aa).

The signal sequence occupies residues 1-21 (MNKVKCYVLFTALLSSLYAHG). Cysteines 30 and 107 form a disulfide.

As to quaternary structure, heterohexamer of one A chain and of five B chains.

The biological activity of the toxin is produced by the A chain, which activates intracellular adenyl cyclase. The chain is Heat-labile enterotoxin B chain (eltB) from Escherichia coli.